The primary structure comprises 531 residues: DNA damage-binding protein cmr1 (531 aa).

2 disordered regions span residues 37 to 83 (GIFP…RGIA) and 218 to 264 (DASQ…MHIH). Over residues 53–64 (KPKKKPAPKKIK) the composition is skewed to basic residues. Residues 186–227 (VTPERIYTMTFHPSEAKPLIFAGDKMGNLGVLDASQERPVSS) form a WD 1 repeat. Residues 233–245 (GDEEEQEDDDDPD) are compositionally biased toward acidic residues. 6 WD repeats span residues 253–293 (PHTR…SVET), 300–340 (SDDV…RTAV), 345–385 (LSEK…HDDP), 392–431 (LSRLSVSHAAFNSAGQVATSSYDDSLKIYDFGAKGIASWE), 454–497 (GRWV…LAQL), and 500–531 (DGITAVPAVAVFHRSKNWIAGGTASGKICLWM).

This sequence belongs to the WD repeat DDB2/WDR76 family.

Functionally, DNA-binding protein that binds to both single- and double-stranded DNA. Binds preferentially to UV-damaged DNA. May be involved in DNA-metabolic processes. The chain is DNA damage-binding protein cmr1 from Aspergillus clavatus (strain ATCC 1007 / CBS 513.65 / DSM 816 / NCTC 3887 / NRRL 1 / QM 1276 / 107).